Reading from the N-terminus, the 245-residue chain is Ubiquinone/menaquinone biosynthesis C-methyltransferase UbiE (245 aa).

S-adenosyl-L-methionine is bound by residues Thr-71, Asp-92, and 118–119; that span reads DA.

The protein belongs to the class I-like SAM-binding methyltransferase superfamily. MenG/UbiE family.

It carries out the reaction a 2-demethylmenaquinol + S-adenosyl-L-methionine = a menaquinol + S-adenosyl-L-homocysteine + H(+). The catalysed reaction is a 2-methoxy-6-(all-trans-polyprenyl)benzene-1,4-diol + S-adenosyl-L-methionine = a 5-methoxy-2-methyl-3-(all-trans-polyprenyl)benzene-1,4-diol + S-adenosyl-L-homocysteine + H(+). It functions in the pathway quinol/quinone metabolism; menaquinone biosynthesis; menaquinol from 1,4-dihydroxy-2-naphthoate: step 2/2. The protein operates within cofactor biosynthesis; ubiquinone biosynthesis. Functionally, methyltransferase required for the conversion of demethylmenaquinol (DMKH2) to menaquinol (MKH2) and the conversion of 2-polyprenyl-6-methoxy-1,4-benzoquinol (DDMQH2) to 2-polyprenyl-3-methyl-6-methoxy-1,4-benzoquinol (DMQH2). The chain is Ubiquinone/menaquinone biosynthesis C-methyltransferase UbiE from Neisseria meningitidis serogroup C / serotype 2a (strain ATCC 700532 / DSM 15464 / FAM18).